Consider the following 170-residue polypeptide: Bifunctional protein PyrR (170 aa).

Positions 90–102 (LVLIDDVLMSGRT) match the PRPP-binding motif.

Belongs to the purine/pyrimidine phosphoribosyltransferase family. PyrR subfamily.

The catalysed reaction is UMP + diphosphate = 5-phospho-alpha-D-ribose 1-diphosphate + uracil. Functionally, regulates the transcription of the pyrimidine nucleotide (pyr) operon in response to exogenous pyrimidines. Its function is as follows. Also displays a weak uracil phosphoribosyltransferase activity which is not physiologically significant. The protein is Bifunctional protein PyrR of Pseudomonas syringae pv. tomato (strain ATCC BAA-871 / DC3000).